We begin with the raw amino-acid sequence, 374 residues long: Histidine biosynthesis bifunctional protein HisB (374 aa).

A histidinol-phosphatase region spans residues 1 to 183 (MKKKVLFIDR…RVAEFLFAGE (183 aa)). Aspartate 9 serves as the catalytic Nucleophile. Mg(2+) contacts are provided by aspartate 9, aspartate 11, and aspartate 131. The active-site Proton donor is the aspartate 11. Positions 184–374 (RRAEIRRTTK…FELPSSKGVL (191 aa)) are imidazoleglycerol-phosphate dehydratase.

In the N-terminal section; belongs to the histidinol-phosphatase family. The protein in the C-terminal section; belongs to the imidazoleglycerol-phosphate dehydratase family. Requires Mg(2+) as cofactor.

The protein resides in the cytoplasm. The enzyme catalyses D-erythro-1-(imidazol-4-yl)glycerol 3-phosphate = 3-(imidazol-4-yl)-2-oxopropyl phosphate + H2O. It catalyses the reaction L-histidinol phosphate + H2O = L-histidinol + phosphate. It participates in amino-acid biosynthesis; L-histidine biosynthesis; L-histidine from 5-phospho-alpha-D-ribose 1-diphosphate: step 6/9. It functions in the pathway amino-acid biosynthesis; L-histidine biosynthesis; L-histidine from 5-phospho-alpha-D-ribose 1-diphosphate: step 8/9. This Bacteroides fragilis (strain ATCC 25285 / DSM 2151 / CCUG 4856 / JCM 11019 / LMG 10263 / NCTC 9343 / Onslow / VPI 2553 / EN-2) protein is Histidine biosynthesis bifunctional protein HisB.